Here is a 193-residue protein sequence, read N- to C-terminus: Ion-translocating oxidoreductase complex subunit A (193 aa).

6 consecutive transmembrane segments (helical) span residues 5–25 (VLLL…FLGL), 39–59 (IGMS…SYLV), 63–83 (ILIP…VIAV), 102–122 (LLGI…VALL), 134–154 (AVYG…FAAL), and 171–191 (SIAL…TGLV).

This sequence belongs to the NqrDE/RnfAE family. The complex is composed of six subunits: RnfA, RnfB, RnfC, RnfD, RnfE and RnfG.

The protein localises to the cell inner membrane. Its function is as follows. Part of a membrane-bound complex that couples electron transfer with translocation of ions across the membrane. The chain is Ion-translocating oxidoreductase complex subunit A from Pseudoalteromonas translucida (strain TAC 125).